We begin with the raw amino-acid sequence, 437 residues long: Adenylosuccinate synthetase 1 (437 aa).

Residues 13–19 and 41–43 contribute to the GTP site; these read GDEGKGK and GHT. Asp14 acts as the Proton acceptor in catalysis. Mg(2+)-binding residues include Asp14 and Gly41. Residues 14–17, 39–42, Thr130, Arg144, Gln225, Thr240, and Arg310 each bind IMP; these read DEGK and NAGH. The Proton donor role is filled by His42. 306–312 serves as a coordination point for substrate; it reads ATTGRLR. Residues Arg312, 338–340, and 421–423 contribute to the GTP site; these read KLD and STG.

Belongs to the adenylosuccinate synthetase family. Homodimer. Mg(2+) serves as cofactor.

It is found in the cytoplasm. It carries out the reaction IMP + L-aspartate + GTP = N(6)-(1,2-dicarboxyethyl)-AMP + GDP + phosphate + 2 H(+). It functions in the pathway purine metabolism; AMP biosynthesis via de novo pathway; AMP from IMP: step 1/2. Functionally, plays an important role in the de novo pathway of purine nucleotide biosynthesis. Catalyzes the first committed step in the biosynthesis of AMP from IMP. This Pseudoalteromonas translucida (strain TAC 125) protein is Adenylosuccinate synthetase 1.